A 126-amino-acid chain; its full sequence is uncharacterized protein (126 aa).

This is an uncharacterized protein from Agrobacterium tumefaciens (strain 15955).